The sequence spans 61 residues: Small ribosomal subunit protein uS14 (61 aa).

Zn(2+)-binding residues include Cys24, Cys27, Cys40, and Cys43.

The protein belongs to the universal ribosomal protein uS14 family. Zinc-binding uS14 subfamily. In terms of assembly, part of the 30S ribosomal subunit. Contacts proteins S3 and S10. It depends on Zn(2+) as a cofactor.

Its function is as follows. Binds 16S rRNA, required for the assembly of 30S particles and may also be responsible for determining the conformation of the 16S rRNA at the A site. The sequence is that of Small ribosomal subunit protein uS14 from Bacillus anthracis (strain A0248).